The primary structure comprises 221 residues: Small ribosomal subunit protein uS3 (221 aa).

One can recognise a KH type-2 domain in the interval 39–108 (IRKFVKKELF…NILINIVEVK (70 aa)).

Belongs to the universal ribosomal protein uS3 family. In terms of assembly, part of the 30S ribosomal subunit. Forms a tight complex with proteins S10 and S14.

In terms of biological role, binds the lower part of the 30S subunit head. Binds mRNA in the 70S ribosome, positioning it for translation. In Clostridium botulinum (strain Alaska E43 / Type E3), this protein is Small ribosomal subunit protein uS3.